Consider the following 303-residue polypeptide: Acetaldehyde dehydrogenase (303 aa).

Position 13–16 (13–16 (SGNI)) interacts with NAD(+). Catalysis depends on Cys-128, which acts as the Acyl-thioester intermediate. Residues 159–167 (SAGPGTRQN) and Asn-278 each bind NAD(+).

This sequence belongs to the acetaldehyde dehydrogenase family.

It carries out the reaction acetaldehyde + NAD(+) + CoA = acetyl-CoA + NADH + H(+). In Chloroflexus aggregans (strain MD-66 / DSM 9485), this protein is Acetaldehyde dehydrogenase.